Reading from the N-terminus, the 112-residue chain is Large ribosomal subunit protein uL22 (112 aa).

It belongs to the universal ribosomal protein uL22 family. Part of the 50S ribosomal subunit.

This protein binds specifically to 23S rRNA; its binding is stimulated by other ribosomal proteins, e.g. L4, L17, and L20. It is important during the early stages of 50S assembly. It makes multiple contacts with different domains of the 23S rRNA in the assembled 50S subunit and ribosome. Its function is as follows. The globular domain of the protein is located near the polypeptide exit tunnel on the outside of the subunit, while an extended beta-hairpin is found that lines the wall of the exit tunnel in the center of the 70S ribosome. In Desulfovibrio desulfuricans (strain ATCC 27774 / DSM 6949 / MB), this protein is Large ribosomal subunit protein uL22.